We begin with the raw amino-acid sequence, 368 residues long: Phosphotransferase IIC component GlvC (368 aa).

Topologically, residues 1-11 (MLSQIQRFGGA) are periplasmic. In terms of domain architecture, PTS EIIC type-1 spans 1–368 (MLSQIQRFGG…VGNMGGGLID (368 aa)). A helical transmembrane segment spans residues 12–32 (MFTPVLLFPFAGIVVGLAILL). The Cytoplasmic portion of the chain corresponds to 33 to 59 (QNPMFVGESLTDPNSLFAQIVHIIEEG). A helical membrane pass occupies residues 60 to 80 (GWTVFRNMPLIFAVGLPIGLA). Topologically, residues 81 to 86 (KQAQGR) are periplasmic. The helical transmembrane segment at 87–107 (ACLAVMVSFLTWNYFINAMGM) threads the bilayer. At 108-129 (TWGSYFGVDFTQDAVAGSGLTM) the chain is on the cytoplasmic side. Residues 130–150 (MAGIKTLDTSIIGAIIISGIV) traverse the membrane as a helical segment. The Periplasmic segment spans residues 151-173 (TALHNRLFDKKLPVFLGIFQGTS). Residues 174–194 (YVVIIAFLVMIPCAWLTLLGW) traverse the membrane as a helical segment. Over 195–198 (PKVQ) the chain is Cytoplasmic. Residues 199–221 (MGIESLQAFLRSAGALGVWVYTF) form a helical membrane-spanning segment. Residues 222-224 (LER) are Periplasmic-facing. The chain crosses the membrane as a helical span at residues 225–245 (ILIPTGLHHFIYGQFIFGPAA). The Cytoplasmic segment spans residues 246-276 (VEGGIQMYWAQHLQEFSLSAEPLKSLFPEGG). A helical transmembrane segment spans residues 277–297 (FALHGNSKIFGAVGISLAMYF). At 298–306 (TAAPENRVK) the chain is on the periplasmic side. The helical transmembrane segment at 307 to 327 (VAGLLIPATLTAMLVGITEPL) threads the bilayer. Glutamate 328 is a topological domain (cytoplasmic). The helical transmembrane segment at 329–349 (FTFLFISPLLFAVHAVLAASM) threads the bilayer. Residues 350–368 (STVMYLFGVVGNMGGGLID) lie on the Periplasmic side of the membrane.

It is found in the cell inner membrane. In terms of biological role, the phosphoenolpyruvate-dependent sugar phosphotransferase system (PTS), a major carbohydrate active -transport system, catalyzes the phosphorylation of incoming sugar substrates concomitant with their translocation across the cell membrane. This operon may be cryptic in wild-type K12 strains. The chain is Phosphotransferase IIC component GlvC from Escherichia coli (strain K12).